A 182-amino-acid polypeptide reads, in one-letter code: Biotin carboxyl carrier protein of acetyl-CoA carboxylase (182 aa).

Residues 70–95 (AAPSPSPEPGTSRAADHAVTSSGSQP) form a disordered region. The Biotinyl-binding domain occupies 104-180 (LAEVASPMVG…EYNQPLMRIK (77 aa)). The residue at position 146 (Lys-146) is an N6-biotinyllysine.

Homodimer.

The protein operates within lipid metabolism; fatty acid biosynthesis. Its function is as follows. This protein is a component of the acetyl coenzyme A carboxylase complex; first, biotin carboxylase catalyzes the carboxylation of the carrier protein and then the transcarboxylase transfers the carboxyl group to form malonyl-CoA. This Nostoc sp. (strain PCC 7120 / SAG 25.82 / UTEX 2576) protein is Biotin carboxyl carrier protein of acetyl-CoA carboxylase (accB).